The primary structure comprises 459 residues: C-type lectin domain family 14 member A (459 aa).

The first 21 residues, 1-21 (MRPALALCLLCPAFWPRPGNG), serve as a signal peptide directing secretion. At 22–386 (EHPTADRAAC…VSLTFDTSST (365 aa)) the chain is on the extracellular side. The C-type lectin domain maps to 33-173 (ASGACYSLHH…LRTDGYLCKY (141 aa)). Cysteine 143 and cysteine 162 are disulfide-bonded. An N-linked (GlcNAc...) asparagine glycan is attached at asparagine 189. One can recognise an EGF-like domain in the interval 246 to 288 (PCSGRYLLAGKCVELPDCLDHLGDFTCECAVGFELGKDGRSCE). Asparagine 306, asparagine 317, and asparagine 370 each carry an N-linked (GlcNAc...) asparagine glycan. Residues 387 to 407 (VVFILVSIAVIVLVVLTITVL) traverse the membrane as a helical segment. The Cytoplasmic portion of the chain corresponds to 408–459 (GLFKLCFHKSRSSRTGKGALDSPGVECDAEATSLHHSSTQCTDIGVKSGTVA). A Phosphoserine modification is found at serine 440.

It is found in the membrane. This chain is C-type lectin domain family 14 member A (Clec14a), found in Mus musculus (Mouse).